Here is a 494-residue protein sequence, read N- to C-terminus: Fumigaclavine B O-acetyltransferase easN (494 aa).

Belongs to the fumigaclavine B O-acetyltransferase family. As to quaternary structure, monomer.

It catalyses the reaction fumigaclavine B + acetyl-CoA = fumigaclavine A + CoA. It participates in alkaloid biosynthesis; ergot alkaloid biosynthesis. Fumigaclavine B O-acetyltransferase; part of the gene cluster that mediates the biosynthesis of fumiclavanine C, a fungal ergot alkaloid. DmaW catalyzes the first step of ergot alkaloid biosynthesis by condensing dimethylallyl diphosphate (DMAP) and tryptophan to form 4-dimethylallyl-L-tryptophan. The second step is catalyzed by the methyltransferase easF that methylates 4-dimethylallyl-L-tryptophan in the presence of S-adenosyl-L-methionine, resulting in the formation of 4-dimethylallyl-L-abrine. The catalase easC and the FAD-dependent oxidoreductase easE then transform 4-dimethylallyl-L-abrine to chanoclavine-I which is further oxidized by EasD in the presence of NAD(+), resulting in the formation of chanoclavine-I aldehyde. EasA reduces chanoclavine-I aldehyde to dihydrochanoclavine-I aldehyde that spontaneously dehydrates to form 6,8-dimethyl-6,7-didehydroergoline. EasG then catalyzes the reduction of 6,8-dimethyl-6,7-didehydroergoline to form festuclavine. Hydrolysis of festuclavine by easM then leads to the formation of fumigaclavine B which is in turn acetylated by easN to fumigaclavine A. Finally, easL catalyzes the conversion of fumigaclavine A into fumigaclavine C by attaching a dimethylallyl moiety to C-2 of the indole nucleus. The protein is Fumigaclavine B O-acetyltransferase easN of Aspergillus fumigatus (strain ATCC MYA-4609 / CBS 101355 / FGSC A1100 / Af293) (Neosartorya fumigata).